Reading from the N-terminus, the 381-residue chain is ELMO domain-containing protein 3 (381 aa).

Residues 170 to 324 (THGRVLQTIY…DLEALAKKSP (155 aa)) form the ELMO domain.

As to expression, both isoform 1 and isoform 2 are widely expressed.

The protein localises to the cell projection. It is found in the stereocilium. Its subcellular location is the kinocilium. It localises to the cytoplasm. The protein resides in the cytoskeleton. In terms of biological role, acts as a GTPase-activating protein (GAP) for ARL2 with low specific activity. This chain is ELMO domain-containing protein 3 (Elmod3), found in Mus musculus (Mouse).